The chain runs to 339 residues: Ornithine utilization regulator (339 aa).

Residues 241-338 (TRVRRLLLAR…GKLPSDYREA (98 aa)) form the HTH araC/xylS-type domain. DNA-binding regions (H-T-H motif) lie at residues 258 to 279 (EQAARELHTSGRSLRRHLSSLG) and 305 to 328 (LYEIALLLGFNDSSNFRRAFRKWT).

Its function is as follows. Probably activates the ArgJ gene that encodes ornithine acetyltransferase. Binds to its own promoter-operator region. Probably binds ornithine. The sequence is that of Ornithine utilization regulator (oruR) from Pseudomonas aeruginosa (strain ATCC 15692 / DSM 22644 / CIP 104116 / JCM 14847 / LMG 12228 / 1C / PRS 101 / PAO1).